Consider the following 925-residue polypeptide: Periplasmic nitrate reductase (925 aa).

A signal peptide (tat-type signal) is located at residues 1–30; that stretch reads MDRREFIKSSAAAAACSAAGIAVPSSLSAA. In terms of domain architecture, 4Fe-4S Mo/W bis-MGD-type spans 36–92; it reads WRWDKSACRFCGTGCGIMVATKNGKIVAVKGDPLAPVNRGLNCIKGYFNAKIMYGED. [4Fe-4S] cluster contacts are provided by C43, C46, C50, and C78. Mo-bis(molybdopterin guanine dinucleotide) contacts are provided by residues K80, Q148, N173, C177, 210–217, M418, Q422, N528, 553–554, K576, D603, and 815–824; these read WGANMAEM, SD, and TGRVLEHWHS. W891 serves as a coordination point for substrate. Residues N899 and K916 each contribute to the Mo-bis(molybdopterin guanine dinucleotide) site.

Belongs to the prokaryotic molybdopterin-containing oxidoreductase family. NasA/NapA/NarB subfamily. Component of the periplasmic nitrate reductase NapAB complex composed of NapA and NapB. [4Fe-4S] cluster serves as cofactor. The cofactor is Mo-bis(molybdopterin guanine dinucleotide). Post-translationally, predicted to be exported by the Tat system. The position of the signal peptide cleavage has not been experimentally proven.

The protein localises to the periplasm. The enzyme catalyses 2 Fe(II)-[cytochrome] + nitrate + 2 H(+) = 2 Fe(III)-[cytochrome] + nitrite + H2O. Its function is as follows. Catalytic subunit of the periplasmic nitrate reductase complex NapAB. Receives electrons from NapB and catalyzes the reduction of nitrate to nitrite. The chain is Periplasmic nitrate reductase from Campylobacter fetus subsp. fetus (strain 82-40).